We begin with the raw amino-acid sequence, 263 residues long: Palmitoyltransferase ZDHHC21 (263 aa).

Topologically, residues 1–4 (MKMR) are cytoplasmic. The chain crosses the membrane as a helical span at residues 5-25 (LHFVVDPMGWFCMSMVFFVWI). The Extracellular portion of the chain corresponds to 26-44 (YNSFLIPKLVLLPHYAEGH). A helical membrane pass occupies residues 45–65 (ITAEPVICYYLASLLCFSALF). The Cytoplasmic segment spans residues 66-131 (RASTTDPGKL…WINNCVGEDN (66 aa)). Positions 90–140 (ELCNKCNMMRPKRSHHCSRCGHCVRRMDHHCPWINNCVGEDNHWLFLQLCF) constitute a DHHC domain. Catalysis depends on C120, which acts as the S-palmitoyl cysteine intermediate. Residues 132–152 (HWLFLQLCFYTQVLSFYTLVL) traverse the membrane as a helical segment. At 153–181 (DFCQYYYFLPLSSVDQADFAVHHELALLR) the chain is on the extracellular side. A helical membrane pass occupies residues 182-202 (VSCFMGLIMFGGISSLFYTQV). Residues 203 to 263 (KGILTDTTTI…KLNLTIRSHV (61 aa)) lie on the Cytoplasmic side of the membrane.

This sequence belongs to the DHHC palmitoyltransferase family.

The protein resides in the golgi apparatus membrane. The protein localises to the golgi apparatus. It localises to the cis-Golgi network membrane. It is found in the cell membrane. It carries out the reaction L-cysteinyl-[protein] + hexadecanoyl-CoA = S-hexadecanoyl-L-cysteinyl-[protein] + CoA. Functionally, palmitoyltransferase that catalyzes the addition of palmitate onto various protein substrates. This is Palmitoyltransferase ZDHHC21 from Danio rerio (Zebrafish).